We begin with the raw amino-acid sequence, 1286 residues long: DNA-directed RNA polymerase subunit beta' (1286 aa).

The Zn(2+) site is built by Cys58, Cys60, Cys73, and Cys76. Mg(2+) contacts are provided by Asp533, Asp535, and Asp537. Zn(2+)-binding residues include Cys867, Cys944, Cys951, and Cys954.

The protein belongs to the RNA polymerase beta' chain family. The RNAP catalytic core consists of 2 alpha, 1 beta, 1 beta' and 1 omega subunit. When a sigma factor is associated with the core the holoenzyme is formed, which can initiate transcription. Mg(2+) serves as cofactor. It depends on Zn(2+) as a cofactor.

It carries out the reaction RNA(n) + a ribonucleoside 5'-triphosphate = RNA(n+1) + diphosphate. Its function is as follows. DNA-dependent RNA polymerase catalyzes the transcription of DNA into RNA using the four ribonucleoside triphosphates as substrates. The sequence is that of DNA-directed RNA polymerase subunit beta' from Tropheryma whipplei (strain TW08/27) (Whipple's bacillus).